Here is a 468-residue protein sequence, read N- to C-terminus: Putrescine aminotransferase (468 aa).

Pyridoxal 5'-phosphate contacts are provided by residues Gly150–Thr151 and Gln274. Lys300 carries the N6-(pyridoxal phosphate)lysine modification. A pyridoxal 5'-phosphate-binding site is contributed by Thr332.

Belongs to the class-III pyridoxal-phosphate-dependent aminotransferase family. Putrescine aminotransferase subfamily. Pyridoxal 5'-phosphate serves as cofactor.

It catalyses the reaction an alkane-alpha,omega-diamine + 2-oxoglutarate = an omega-aminoaldehyde + L-glutamate. It carries out the reaction putrescine + 2-oxoglutarate = 1-pyrroline + L-glutamate + H2O. The catalysed reaction is cadaverine + 2-oxoglutarate = 5-aminopentanal + L-glutamate. It functions in the pathway amine and polyamine degradation; putrescine degradation; 4-aminobutanal from putrescine (transaminase route): step 1/1. Catalyzes the aminotransferase reaction from putrescine to 2-oxoglutarate, leading to glutamate and 4-aminobutanal, which spontaneously cyclizes to form 1-pyrroline. This is the first step in one of two pathways for putrescine degradation, where putrescine is converted into 4-aminobutanoate (gamma-aminobutyrate or GABA) via 4-aminobutanal. Also functions as a cadaverine transaminase in a a L-lysine degradation pathway to succinate that proceeds via cadaverine, glutarate and L-2-hydroxyglutarate. This is Putrescine aminotransferase from Pectobacterium atrosepticum (strain SCRI 1043 / ATCC BAA-672) (Erwinia carotovora subsp. atroseptica).